Reading from the N-terminus, the 216-residue chain is RNA pyrophosphohydrolase (216 aa).

Residues 6–149 form the Nudix hydrolase domain; that stretch reads GFRPNVGIIL…KRDVYQLALT (144 aa). The Nudix box motif lies at 38 to 59; the sequence is GGIKYGETPMQAMYRELHEETG. The tract at residues 159 to 180 is disordered; it reads AQRTDKSRGPRAPRYPRVSNGH.

The protein belongs to the Nudix hydrolase family. RppH subfamily. Requires a divalent metal cation as cofactor.

In terms of biological role, accelerates the degradation of transcripts by removing pyrophosphate from the 5'-end of triphosphorylated RNA, leading to a more labile monophosphorylated state that can stimulate subsequent ribonuclease cleavage. This Burkholderia thailandensis (strain ATCC 700388 / DSM 13276 / CCUG 48851 / CIP 106301 / E264) protein is RNA pyrophosphohydrolase.